The following is a 183-amino-acid chain: Ribulose bisphosphate carboxylase small subunit, chloroplastic 4 (183 aa).

Residues 1-57 (MASSLMSNAATTMAAATTTAQANMVAPFNGLKSISAFPVTRKNNDITSVASNGGRVQ) constitute a chloroplast transit peptide.

The protein belongs to the RuBisCO small chain family. Heterohexadecamer of 8 large and 8 small subunits.

The protein resides in the plastid. It localises to the chloroplast. Its function is as follows. RuBisCO catalyzes two reactions: the carboxylation of D-ribulose 1,5-bisphosphate, the primary event in carbon dioxide fixation, as well as the oxidative fragmentation of the pentose substrate. Both reactions occur simultaneously and in competition at the same active site. Although the small subunit is not catalytic it is essential for maximal activity. The protein is Ribulose bisphosphate carboxylase small subunit, chloroplastic 4 of Mesembryanthemum crystallinum (Common ice plant).